The sequence spans 674 residues: Protein kinase C delta type (674 aa).

The C2 domain occupies 1–106 (MAPFLRISFN…KNNGKAEFWL (106 aa)). Residues threonine 43 and threonine 50 each carry the phosphothreonine modification. Tyrosine 64 bears the Phosphotyrosine mark. Serine 130 is subject to Phosphoserine. At threonine 141 the chain carries Phosphothreonine. Tyrosine 155 bears the Phosphotyrosine mark. A Phorbol-ester/DAG-type 1 zinc finger spans residues 158 to 208 (NHEFIATFFGQPTFCSVCKEFVWGLNKQGYKCRQCNAAIHKKCIDKIIGRC). Position 218 is a phosphothreonine (threonine 218). Residues 230–280 (PHRFKVYNYMSPTFCDHCGSLLWGLVKQGLKCEDCGMNVHHKCREKVANLC) form a Phorbol-ester/DAG-type 2 zinc finger. Serine 299 carries the phosphoserine; by autocatalysis modification. Residues tyrosine 311 and tyrosine 332 each carry the phosphotyrosine; by SRC modification. Positions 347–601 (FTFQKVLGKG…TGNIRIHPFF (255 aa)) constitute a Protein kinase domain. 353–361 (LGKGSFGKV) is a binding site for ATP. Position 372 is a phosphotyrosine (tyrosine 372). Lysine 376 contacts ATP. A Phosphothreonine modification is found at threonine 449. Aspartate 471 (proton acceptor) is an active-site residue. Residue serine 504 is modified to Phosphoserine. Phosphothreonine; by autocatalysis is present on threonine 505. At tyrosine 565 the chain carries Phosphotyrosine. The 72-residue stretch at 602 to 673 (KTINWSLLEK…VNPKFEQFLD (72 aa)) folds into the AGC-kinase C-terminal domain. A phosphoserine mark is found at serine 643, serine 652, and serine 662.

This sequence belongs to the protein kinase superfamily. AGC Ser/Thr protein kinase family. PKC subfamily. In terms of assembly, interacts with PDPK1 (via N-terminal region). Interacts with RAD9A. Interacts with CDCP1. Interacts with MUC1. Interacts with VASP. Interacts with CAVIN3. Interacts with PRKD2 (via N-terminus and zing-finger domain 1 and 2) in response to oxidative stress; the interaction is independent of PRKD2 tyrosine phosphorylation. Interacts with PLSC3; interaction is enhanced by UV irradiation. In terms of processing, autophosphorylated and/or phosphorylated at Thr-505, within the activation loop; phosphorylation at Thr-505 is not a prerequisite for enzymatic activity. Autophosphorylated at Ser-299. Upon TNFSF10/TRAIL treatment, phosphorylated at Tyr-155; phosphorylation is required for its translocation to the endoplasmic reticulum and cleavage by caspase-3. Phosphorylated at Tyr-311, Tyr-332 and Tyr-565; phosphorylation of Tyr-311 and Tyr-565 following thrombin or zymosan stimulation potentiates its kinase activity. Phosphorylated by protein kinase PDPK1; phosphorylation is inhibited by the apoptotic C-terminal cleavage product of PKN2. Phosphorylated at Tyr-311 through a SYK and SRC mechanism downstream of C-type lectin receptors activation, promoting its activation. Post-translationally, proteolytically cleaved into a catalytic subunit and a regulatory subunit by caspase-3 during apoptosis which results in kinase activation. In terms of tissue distribution, isoform 1 is highly expressed in developing pro- and pre-B-cells and moderately in mature T-cells. Isoform 2 is highly expressed in testis and ovary and at a lower level in thymocytes, brain and kidney.

It is found in the cytoplasm. The protein resides in the perinuclear region. It localises to the nucleus. The protein localises to the cell membrane. Its subcellular location is the mitochondrion. It is found in the endomembrane system. It catalyses the reaction L-seryl-[protein] + ATP = O-phospho-L-seryl-[protein] + ADP + H(+). The catalysed reaction is L-threonyl-[protein] + ATP = O-phospho-L-threonyl-[protein] + ADP + H(+). It carries out the reaction L-tyrosyl-[protein] + ATP = O-phospho-L-tyrosyl-[protein] + ADP + H(+). Novel PKCs (PRKCD, PRKCE, PRKCH and PRKCQ) are calcium-insensitive, but activated by diacylglycerol (DAG) and phosphatidylserine. Three specific sites; Thr-505 (activation loop of the kinase domain), Ser-643 (turn motif) and Ser-662 (hydrophobic region), need to be phosphorylated for its full activation. Activated by caspase-3 (CASP3) cleavage during apoptosis. After cleavage, the pseudosubstrate motif in the regulatory subunit is released from the substrate recognition site of the catalytic subunit, which enables PRKCD to become constitutively activated. The catalytic subunit which displays properties of a sphingosine-dependent protein kinase is activated by D-erythro-sphingosine (Sph) or N,N-dimethyl-D-erythrosphingosine (DMS) or N,N,N-trimethyl-D-erythrosphingosine (TMS), but not by ceramide or Sph-1-P and is strongly inhibited by phosphatidylserine. Its function is as follows. Calcium-independent, phospholipid- and diacylglycerol (DAG)-dependent serine/threonine-protein kinase that plays contrasting roles in cell death and cell survival by functioning as a pro-apoptotic protein during DNA damage-induced apoptosis, but acting as an anti-apoptotic protein during cytokine receptor-initiated cell death, is involved in tumor suppression, is required for oxygen radical production by NADPH oxidase and acts as a positive or negative regulator in platelet functional responses. Negatively regulates B cell proliferation and also has an important function in self-antigen induced B cell tolerance induction. Upon DNA damage, activates the promoter of the death-promoting transcription factor BCLAF1/Btf to trigger BCLAF1-mediated p53/TP53 gene transcription and apoptosis. In response to oxidative stress, interact with and activate CHUK/IKKA in the nucleus, causing the phosphorylation of p53/TP53. In the case of ER stress or DNA damage-induced apoptosis, can form a complex with the tyrosine-protein kinase ABL1 which trigger apoptosis independently of p53/TP53. In cytosol can trigger apoptosis by activating MAPK11 or MAPK14, inhibiting AKT1 and decreasing the level of X-linked inhibitor of apoptosis protein (XIAP), whereas in nucleus induces apoptosis via the activation of MAPK8 or MAPK9. Upon ionizing radiation treatment, is required for the activation of the apoptosis regulators BAX and BAK, which trigger the mitochondrial cell death pathway. Can phosphorylate MCL1 and target it for degradation which is sufficient to trigger for BAX activation and apoptosis. Is required for the control of cell cycle progression both at G1/S and G2/M phases. Mediates phorbol 12-myristate 13-acetate (PMA)-induced inhibition of cell cycle progression at G1/S phase by up-regulating the CDK inhibitor CDKN1A/p21 and inhibiting the cyclin CCNA2 promoter activity. In response to UV irradiation can phosphorylate CDK1, which is important for the G2/M DNA damage checkpoint activation. Can protect glioma cells from the apoptosis induced by TNFSF10/TRAIL, probably by inducing increased phosphorylation and subsequent activation of AKT1. Can also act as tumor suppressor upon mitogenic stimulation with PMA or TPA. In N-formyl-methionyl-leucyl-phenylalanine (fMLP)-treated cells, is required for NCF1 (p47-phox) phosphorylation and activation of NADPH oxidase activity, and regulates TNF-elicited superoxide anion production in neutrophils, by direct phosphorylation and activation of NCF1 or indirectly through MAPK1/3 (ERK1/2) signaling pathways. Involved in antifungal immunity by mediating phosphorylation and activation of CARD9 downstream of C-type lectin receptors activation, promoting interaction between CARD9 and BCL10, followed by activation of NF-kappa-B and MAP kinase p38 pathways. May also play a role in the regulation of NADPH oxidase activity in eosinophil after stimulation with IL5, leukotriene B4 or PMA. In collagen-induced platelet aggregation, acts a negative regulator of filopodia formation and actin polymerization by interacting with and negatively regulating VASP phosphorylation. Downstream of PAR1, PAR4 and CD36/GP4 receptors, regulates differentially platelet dense granule secretion; acts as a positive regulator in PAR-mediated granule secretion, whereas it negatively regulates CD36/GP4-mediated granule release. Phosphorylates MUC1 in the C-terminal and regulates the interaction between MUC1 and beta-catenin. The catalytic subunit phosphorylates 14-3-3 proteins (YWHAB, YWHAZ and YWHAH) in a sphingosine-dependent fashion. Phosphorylates ELAVL1 in response to angiotensin-2 treatment. Phosphorylates mitochondrial phospholipid scramblase 3 (PLSCR3), resulting in increased cardiolipin expression on the mitochondrial outer membrane which facilitates apoptosis. Phosphorylates SMPD1 which induces SMPD1 secretion. The protein is Protein kinase C delta type of Mus musculus (Mouse).